We begin with the raw amino-acid sequence, 547 residues long: uncharacterized protein (547 aa).

The protein to B.pertussis prn N-terminal region.

This is an uncharacterized protein from Escherichia coli O157:H7.